The sequence spans 94 residues: DASH complex subunit dad2 (94 aa).

Positions 18-38 form a coiled coil; sequence KLRDSSNDMVQQIETLAAKLE. The tract at residues 72-94 is disordered; it reads VRIPPSTSNTNASATEQGDVEEV. Polar residues predominate over residues 76-87; that stretch reads PSTSNTNASATE.

It belongs to the DASH complex DAD2 family. In terms of assembly, component of the DASH complex consisting of ask1, dad1, dad2, dad3, dad4, dam1, duo1, dad5, spc19 and spc34, with a stoichiometry of one copy of each subunit per complex. Multiple DASH complexes oligomerize to form a ring that encircles spindle microtubules and organizes the rod-like NDC80 complexes of the outer kinetochore. DASH complex oligomerization strengthens microtubule attachments. On cytoplasmic microtubules, DASH complexes appear to form patches instead of rings.

The protein resides in the nucleus. It localises to the cytoplasm. Its subcellular location is the cytoskeleton. The protein localises to the spindle. It is found in the chromosome. The protein resides in the centromere. It localises to the kinetochore. In terms of biological role, component of the DASH complex that connects microtubules with kinetochores and couples microtubule depolymerisation to chromosome movement; it is involved in retrieving kinetochores to the spindle poles before their re-orientation on the spindle in early mitosis and allows microtubule depolymerization to pull chromosomes apart and resist detachment during anaphase. Kinetochores, consisting of a centromere-associated inner segment and a microtubule-contacting outer segment, play a crucial role in chromosome segregation by mediating the physical connection between centromeric DNA and microtubules. Kinetochores also serve as an input point for the spindle assembly checkpoint, which delays anaphase until all chromosomes have bioriented on the mitotic spindle. The DASH complex mediates bipolar kinetochore-microtubule attachments and facilitates the formation of additional interactions between outer kinetochore components and spindle microtubules. During chromosome movement along the microtubule, it is required both for the sliding of kinetochores along the lateral side of the microtubule and also for microtubule end-on pulling on the kinetochore. Modulates cytoplasmic microtubule dynamics by tracking the plus-end of shortening microtubules and slowing their depolymerization. The chain is DASH complex subunit dad2 from Schizosaccharomyces pombe (strain 972 / ATCC 24843) (Fission yeast).